Here is a 340-residue protein sequence, read N- to C-terminus: tRNA N6-adenosine threonylcarbamoyltransferase (340 aa).

His-114 and His-118 together coordinate Fe cation. Substrate contacts are provided by residues 140–144, Asp-173, Gly-186, Asp-190, and Asn-281; that span reads TISGG. Residue Asp-309 coordinates Fe cation.

It belongs to the KAE1 / TsaD family. The cofactor is Fe(2+).

The protein resides in the cytoplasm. It carries out the reaction L-threonylcarbamoyladenylate + adenosine(37) in tRNA = N(6)-L-threonylcarbamoyladenosine(37) in tRNA + AMP + H(+). Its function is as follows. Required for the formation of a threonylcarbamoyl group on adenosine at position 37 (t(6)A37) in tRNAs that read codons beginning with adenine. Is involved in the transfer of the threonylcarbamoyl moiety of threonylcarbamoyl-AMP (TC-AMP) to the N6 group of A37, together with TsaE and TsaB. TsaD likely plays a direct catalytic role in this reaction. This Christiangramia forsetii (strain DSM 17595 / CGMCC 1.15422 / KT0803) (Gramella forsetii) protein is tRNA N6-adenosine threonylcarbamoyltransferase.